The following is a 292-amino-acid chain: 2-(5''-triphosphoribosyl)-3'-dephosphocoenzyme-A synthase (292 aa).

This sequence belongs to the CitG/MdcB family.

It catalyses the reaction 3'-dephospho-CoA + ATP = 2'-(5''-triphospho-alpha-D-ribosyl)-3'-dephospho-CoA + adenine. Its function is as follows. Catalyzes the formation of 2-(5''-triphosphoribosyl)-3'-dephosphocoenzyme-A, the precursor of the prosthetic group of the holo-acyl carrier protein (gamma chain) of citrate lyase, from ATP and dephospho-CoA. The sequence is that of 2-(5''-triphosphoribosyl)-3'-dephosphocoenzyme-A synthase from Escherichia coli O17:K52:H18 (strain UMN026 / ExPEC).